A 365-amino-acid polypeptide reads, in one-letter code: Peptide chain release factor 2 (365 aa).

The residue at position 249 (Q249) is an N5-methylglutamine.

It belongs to the prokaryotic/mitochondrial release factor family. In terms of processing, methylated by PrmC. Methylation increases the termination efficiency of RF2.

The protein localises to the cytoplasm. Its function is as follows. Peptide chain release factor 2 directs the termination of translation in response to the peptide chain termination codons UGA and UAA. This chain is Peptide chain release factor 2, found in Acholeplasma laidlawii (strain PG-8A).